We begin with the raw amino-acid sequence, 504 residues long: Anaerobic nitric oxide reductase transcription regulator NorR (504 aa).

Residue aspartate 57 is modified to 4-aspartylphosphate. The Sigma-54 factor interaction domain occupies 187 to 416 (MIGLSPGMTQ…LEHAIHRAVV (230 aa)). ATP is bound by residues 215-222 (GETGTGKE) and 278-287 (ADNGTLFLDE). A DNA-binding region (H-T-H motif) is located at residues 479 to 498 (WAACARMLETDVANLHRLAK).

The protein operates within nitrogen metabolism; nitric oxide reduction. In terms of biological role, required for the expression of anaerobic nitric oxide (NO) reductase, acts as a transcriptional activator for at least the norVW operon. Activation also requires sigma-54. This Escherichia coli O127:H6 (strain E2348/69 / EPEC) protein is Anaerobic nitric oxide reductase transcription regulator NorR.